The following is a 361-amino-acid chain: tRNA 2-selenouridine synthase (361 aa).

The 124-residue stretch at 11–134 (LLADTPLIDV…LRQTAIQATW (124 aa)) folds into the Rhodanese domain. The active-site S-selanylcysteine intermediate is the Cys94.

The protein belongs to the SelU family. Monomer.

It carries out the reaction 5-methylaminomethyl-2-thiouridine(34) in tRNA + selenophosphate + (2E)-geranyl diphosphate + H2O + H(+) = 5-methylaminomethyl-2-selenouridine(34) in tRNA + (2E)-thiogeraniol + phosphate + diphosphate. The enzyme catalyses 5-methylaminomethyl-2-thiouridine(34) in tRNA + (2E)-geranyl diphosphate = 5-methylaminomethyl-S-(2E)-geranyl-thiouridine(34) in tRNA + diphosphate. It catalyses the reaction 5-methylaminomethyl-S-(2E)-geranyl-thiouridine(34) in tRNA + selenophosphate + H(+) = 5-methylaminomethyl-2-(Se-phospho)selenouridine(34) in tRNA + (2E)-thiogeraniol. The catalysed reaction is 5-methylaminomethyl-2-(Se-phospho)selenouridine(34) in tRNA + H2O = 5-methylaminomethyl-2-selenouridine(34) in tRNA + phosphate. Functionally, involved in the post-transcriptional modification of the uridine at the wobble position (U34) of tRNA(Lys), tRNA(Glu) and tRNA(Gln). Catalyzes the conversion of 2-thiouridine (S2U-RNA) to 2-selenouridine (Se2U-RNA). Acts in a two-step process involving geranylation of 2-thiouridine (S2U) to S-geranyl-2-thiouridine (geS2U) and subsequent selenation of the latter derivative to 2-selenouridine (Se2U) in the tRNA chain. The chain is tRNA 2-selenouridine synthase from Salmonella schwarzengrund (strain CVM19633).